The following is a 428-amino-acid chain: MSYLFTSESVSEGHPDKVADQISDALLDEFLAYDKNSKVACETLVTTGQVVLAGEVKSSAYVDVQEVARGVIEKIGYTKSEYQFEAKSCGVFSSIHEQSGDINRGVERADPYEQGAGDQGMMFGYATNETENYMPLALDLSHSLLWELAKIRKEEPDLMPYLRPDAKSQVTIEYDDNGKPLRIDTIVVSTQHDEFIGPKGISQKEADEAMQKRIALDVKKILIPRVKAQYPAHVQALFNDNIIYHVNPTGKFVIGGPHGDTGLTGRKIIVDTYGGKGAHGGGAFSGKDPSKVDRSAAYAARHIAKNMVAAGVADEMLVQVSYAIGVAKPMNIFVNTFGRAKVNMTDGEIAAKIWDIFDMRPKAIEERLKLRNPIYFETASYGHMGRKPQTVTKTFSSRYLQKPVTCDVELFTWEKLDYADKIKDVFGL.

Position 14 (histidine 14) interacts with ATP. Aspartate 16 is a Mg(2+) binding site. Glutamate 42 is a K(+) binding site. 2 residues coordinate L-methionine: glutamate 55 and glutamine 98. Positions 98 to 108 are flexible loop; that stretch reads QSGDINRGVER. ATP contacts are provided by residues 165–167, 251–252, aspartate 260, 266–267, alanine 283, and lysine 287; these read DAK, KF, and RK. Residue aspartate 260 participates in L-methionine binding. An L-methionine-binding site is contributed by lysine 291.

This sequence belongs to the AdoMet synthase family. In terms of assembly, homotetramer; dimer of dimers. Requires Mg(2+) as cofactor. K(+) serves as cofactor.

It localises to the cytoplasm. It carries out the reaction L-methionine + ATP + H2O = S-adenosyl-L-methionine + phosphate + diphosphate. It functions in the pathway amino-acid biosynthesis; S-adenosyl-L-methionine biosynthesis; S-adenosyl-L-methionine from L-methionine: step 1/1. In terms of biological role, catalyzes the formation of S-adenosylmethionine (AdoMet) from methionine and ATP. The overall synthetic reaction is composed of two sequential steps, AdoMet formation and the subsequent tripolyphosphate hydrolysis which occurs prior to release of AdoMet from the enzyme. This Parabacteroides distasonis (strain ATCC 8503 / DSM 20701 / CIP 104284 / JCM 5825 / NCTC 11152) protein is S-adenosylmethionine synthase.